We begin with the raw amino-acid sequence, 250 residues long: Pyridoxine 5'-phosphate synthase (250 aa).

Residues asparagine 8 and arginine 19 each coordinate 3-amino-2-oxopropyl phosphate. Histidine 44 functions as the Proton acceptor in the catalytic mechanism. 1-deoxy-D-xylulose 5-phosphate contacts are provided by arginine 46 and histidine 51. Catalysis depends on glutamate 76, which acts as the Proton acceptor. Threonine 106 contacts 1-deoxy-D-xylulose 5-phosphate. The active-site Proton donor is histidine 200. Residues aspartate 201 and 223–224 contribute to the 3-amino-2-oxopropyl phosphate site; that span reads GH.

Belongs to the PNP synthase family. Homooctamer; tetramer of dimers.

The protein resides in the cytoplasm. The enzyme catalyses 3-amino-2-oxopropyl phosphate + 1-deoxy-D-xylulose 5-phosphate = pyridoxine 5'-phosphate + phosphate + 2 H2O + H(+). It functions in the pathway cofactor biosynthesis; pyridoxine 5'-phosphate biosynthesis; pyridoxine 5'-phosphate from D-erythrose 4-phosphate: step 5/5. Functionally, catalyzes the complicated ring closure reaction between the two acyclic compounds 1-deoxy-D-xylulose-5-phosphate (DXP) and 3-amino-2-oxopropyl phosphate (1-amino-acetone-3-phosphate or AAP) to form pyridoxine 5'-phosphate (PNP) and inorganic phosphate. In Allorhizobium ampelinum (strain ATCC BAA-846 / DSM 112012 / S4) (Agrobacterium vitis (strain S4)), this protein is Pyridoxine 5'-phosphate synthase.